The sequence spans 434 residues: CCA tRNA nucleotidyltransferase 1, mitochondrial (434 aa).

Residues methionine 1–phenylalanine 41 constitute a mitochondrion transit peptide. Positions 64 and 67 each coordinate ATP. 2 residues coordinate CTP: glycine 64 and arginine 67. Aspartate 77 and aspartate 79 together coordinate Mg(2+). ATP-binding residues include arginine 151, aspartate 194, arginine 197, arginine 200, and arginine 203. CTP is bound by residues arginine 151, aspartate 194, arginine 197, arginine 200, and arginine 203. Serine 400 carries the post-translational modification Phosphoserine. Lysine 402 carries the post-translational modification N6-acetyllysine.

It belongs to the tRNA nucleotidyltransferase/poly(A) polymerase family. In terms of assembly, monomer, and homodimer; disulfide-linked. Mg(2+) serves as cofactor.

Its subcellular location is the mitochondrion. The protein localises to the cytoplasm. It localises to the nucleus. It carries out the reaction a tRNA precursor + 2 CTP + ATP = a tRNA with a 3' CCA end + 3 diphosphate. It catalyses the reaction a tRNA with a 3' CCA end + 2 CTP + ATP = a tRNA with a 3' CCACCA end + 3 diphosphate. Its function is as follows. Nucleotidyltransferase that catalyzes the addition and repair of the essential 3'-terminal CCA sequence in tRNAs, which is necessary for the attachment of amino acids to the 3' terminus of tRNA molecules, using CTP and ATP as substrates. tRNA 3'-terminal CCA addition is required both for tRNA processing and repair. Promotes tRNA repair and recycling downstream of the ribosome-associated quality control (RQC) pathway by mediating addition of the tRNA 3'-terminal CCA following cleavage by ANKZF1 and repair by ELAC1. Also involved in tRNA surveillance by mediating tandem CCA addition to generate a CCACCA at the 3' terminus of unstable tRNAs and tRNA-like transcripts. While stable tRNAs receive only 3'-terminal CCA, unstable tRNAs beginning with GG are marked with CCACCA and rapidly degraded. The structural flexibility of RNA controls the choice between CCA versus CCACCA addition: following the first CCA addition cycle, nucleotide-binding to the active site triggers a clockwise screw motion, producing torque on the RNA. This ejects stable RNAs, whereas unstable RNAs are refolded while bound to the enzyme and subjected to a second CCA catalytic cycle. Functionally, adds 2 C residues (CC-) to the 3' terminus of tRNA molecules instead of a complete CCA end as isoform 1 does (in vitro). The sequence is that of CCA tRNA nucleotidyltransferase 1, mitochondrial from Homo sapiens (Human).